A 214-amino-acid polypeptide reads, in one-letter code: Cytochrome b (214 aa).

The next 4 membrane-spanning stretches (helical) occupy residues 31–51, 75–96, 111–131, and 176–196; these read FGSM…FLAI, WIMQ…YTHI, WLSG…GYVL, and FFAL…IHIL. Heme b is bound by residues H81 and H95. Positions 180 and 194 each coordinate heme b. Residue H199 participates in a ubiquinone binding.

The protein belongs to the cytochrome b family. The cytochrome bc1 complex contains 3 respiratory subunits (MT-CYB, CYC1 and UQCRFS1), 2 core proteins (UQCRC1 and UQCRC2) and probably 6 low-molecular weight proteins. It depends on heme b as a cofactor.

It localises to the mitochondrion inner membrane. Its function is as follows. Component of the ubiquinol-cytochrome c reductase complex (complex III or cytochrome b-c1 complex) that is part of the mitochondrial respiratory chain. The b-c1 complex mediates electron transfer from ubiquinol to cytochrome c. Contributes to the generation of a proton gradient across the mitochondrial membrane that is then used for ATP synthesis. The sequence is that of Cytochrome b (MT-CYB) from Lachesis muta muta (Bushmaster).